The following is a 312-amino-acid chain: Ribonuclease HIII (312 aa).

The RNase H type-2 domain occupies 95–312 (MSILGSDEVG…TEKAFRLLKK (218 aa)). 3 residues coordinate a divalent metal cation: aspartate 101, glutamate 102, and aspartate 206.

Belongs to the RNase HII family. RnhC subfamily. Mn(2+) is required as a cofactor. Requires Mg(2+) as cofactor.

It is found in the cytoplasm. The enzyme catalyses Endonucleolytic cleavage to 5'-phosphomonoester.. Its function is as follows. Endonuclease that specifically degrades the RNA of RNA-DNA hybrids. This Bacillus mycoides (strain KBAB4) (Bacillus weihenstephanensis) protein is Ribonuclease HIII.